The chain runs to 92 residues: Large ribosomal subunit protein bL25 (92 aa).

The protein belongs to the bacterial ribosomal protein bL25 family. In terms of assembly, part of the 50S ribosomal subunit; part of the 5S rRNA/L5/L18/L25 subcomplex. Contacts the 5S rRNA. Binds to the 5S rRNA independently of L5 and L18.

Functionally, this is one of the proteins that binds to the 5S RNA in the ribosome where it forms part of the central protuberance. This is Large ribosomal subunit protein bL25 from Vibrio parahaemolyticus serotype O3:K6 (strain RIMD 2210633).